Here is a 146-residue protein sequence, read N- to C-terminus: D-aminoacyl-tRNA deacylase (146 aa).

The Gly-cisPro motif, important for rejection of L-amino acids signature appears at 137-138 (GP).

It belongs to the DTD family. Homodimer.

Its subcellular location is the cytoplasm. The catalysed reaction is glycyl-tRNA(Ala) + H2O = tRNA(Ala) + glycine + H(+). The enzyme catalyses a D-aminoacyl-tRNA + H2O = a tRNA + a D-alpha-amino acid + H(+). An aminoacyl-tRNA editing enzyme that deacylates mischarged D-aminoacyl-tRNAs. Also deacylates mischarged glycyl-tRNA(Ala), protecting cells against glycine mischarging by AlaRS. Acts via tRNA-based rather than protein-based catalysis; rejects L-amino acids rather than detecting D-amino acids in the active site. By recycling D-aminoacyl-tRNA to D-amino acids and free tRNA molecules, this enzyme counteracts the toxicity associated with the formation of D-aminoacyl-tRNA entities in vivo and helps enforce protein L-homochirality. The chain is D-aminoacyl-tRNA deacylase from Psychrobacter sp. (strain PRwf-1).